Reading from the N-terminus, the 475-residue chain is Ribulose bisphosphate carboxylase large chain (475 aa).

Residues 1-2 (MS) constitute a propeptide that is removed on maturation. Proline 3 is subject to N-acetylproline. Lysine 14 bears the N6,N6,N6-trimethyllysine mark. Residues asparagine 123 and threonine 173 each contribute to the substrate site. Lysine 175 acts as the Proton acceptor in catalysis. A substrate-binding site is contributed by lysine 177. Residues lysine 201, aspartate 203, and glutamate 204 each contribute to the Mg(2+) site. The residue at position 201 (lysine 201) is an N6-carboxylysine. Residue histidine 294 is the Proton acceptor of the active site. The substrate site is built by arginine 295, histidine 327, and serine 379.

Belongs to the RuBisCO large chain family. Type I subfamily. In terms of assembly, heterohexadecamer of 8 large chains and 8 small chains; disulfide-linked. The disulfide link is formed within the large subunit homodimers. Mg(2+) serves as cofactor. The disulfide bond which can form in the large chain dimeric partners within the hexadecamer appears to be associated with oxidative stress and protein turnover.

The protein resides in the plastid. Its subcellular location is the chloroplast. It catalyses the reaction 2 (2R)-3-phosphoglycerate + 2 H(+) = D-ribulose 1,5-bisphosphate + CO2 + H2O. The catalysed reaction is D-ribulose 1,5-bisphosphate + O2 = 2-phosphoglycolate + (2R)-3-phosphoglycerate + 2 H(+). RuBisCO catalyzes two reactions: the carboxylation of D-ribulose 1,5-bisphosphate, the primary event in carbon dioxide fixation, as well as the oxidative fragmentation of the pentose substrate in the photorespiration process. Both reactions occur simultaneously and in competition at the same active site. This is Ribulose bisphosphate carboxylase large chain from Castanea sativa (Sweet chestnut).